The sequence spans 50 residues: Small integral membrane protein 46 (50 aa).

A helical membrane pass occupies residues 15–37 (TTFQLWLQLLLWAHLAVRFLGYL).

Its subcellular location is the membrane. The protein is Small integral membrane protein 46 of Homo sapiens (Human).